The sequence spans 163 residues: uncharacterized protein (163 aa).

2 disordered regions span residues M1 to S78 and P115 to H163.

This is an uncharacterized protein from Homo sapiens (Human).